The chain runs to 604 residues: Putative sodium-dependent multivitamin transporter (604 aa).

The next 6 membrane-spanning stretches (helical) occupy residues L4 to I24, V48 to V68, M78 to I98, V134 to L154, I160 to L180, and L188 to L208. Residues N222 and N225 are each glycosylated (N-linked (GlcNAc...) asparagine). Helical transmembrane passes span H234 to N254, A273 to L293, L331 to I351, L389 to L409, L413 to V433, G440 to P460, and A511 to L531.

Belongs to the sodium:solute symporter (SSF) (TC 2.A.21) family.

The protein localises to the cell membrane. In Drosophila melanogaster (Fruit fly), this protein is Putative sodium-dependent multivitamin transporter.